We begin with the raw amino-acid sequence, 737 residues long: Procollagen-lysine,2-oxoglutarate 5-dioxygenase 2 (737 aa).

The signal sequence occupies residues 1 to 25; sequence MGDRGARPGRLMPMLALLSWAAGLG. N-linked (GlcNAc...) asparagine glycosylation is found at N63 and N209. Phosphothreonine is present on T320. At Y323 the chain carries Phosphotyrosine. N-linked (GlcNAc...) asparagine glycans are attached at residues N365 and N522. The 94-residue stretch at 644-737 folds into the Fe2OG dioxygenase domain; that stretch reads KGFALLNFVV…RYIAVSFIDP (94 aa). Fe cation-binding residues include H666 and D668. N696 carries N-linked (GlcNAc...) asparagine glycosylation. K704 carries the post-translational modification N6-succinyllysine. H718 provides a ligand contact to Fe cation. N-linked (GlcNAc...) asparagine glycosylation occurs at N725. The active site involves R728.

As to quaternary structure, homodimer. Fe(2+) is required as a cofactor. It depends on L-ascorbate as a cofactor. In terms of tissue distribution, is highly expressed in the heart, lung, kidney, eye, ovary and placenta.

It localises to the rough endoplasmic reticulum membrane. It carries out the reaction L-lysyl-[collagen] + 2-oxoglutarate + O2 = (5R)-5-hydroxy-L-lysyl-[collagen] + succinate + CO2. Forms hydroxylysine residues in -Xaa-Lys-Gly- sequences in collagens. These hydroxylysines serve as sites of attachment for carbohydrate units and are essential for the stability of the intermolecular collagen cross-links. The protein is Procollagen-lysine,2-oxoglutarate 5-dioxygenase 2 (Plod2) of Mus musculus (Mouse).